The chain runs to 538 residues: Putative outer membrane porin BglH (538 aa).

The first 25 residues, M1–A25, serve as a signal peptide directing secretion.

This sequence belongs to the porin LamB (TC 1.B.3) family.

The protein localises to the cell outer membrane. In terms of biological role, may be a sugar porin with a broad carbohydrate specificity. This chain is Putative outer membrane porin BglH (bglH), found in Escherichia coli (strain UTI89 / UPEC).